The chain runs to 171 residues: Pro-corazonin (171 aa).

Residues 1–20 (MLHTRTIALLLVGLVVLVNA) form the signal peptide. Residue glutamine 21 is modified to Pyrrolidone carboxylic acid. Asparagine 31 bears the Asparagine amide mark. The propeptide occupies 82–171 (FLRNPCDLRV…GFSDHRQKIA (90 aa)).

It belongs to the corazonin family.

It is found in the secreted. Cardioactive peptide. Corazonin is probably involved in the physiological regulation of the heart beat. This is Pro-corazonin from Anopheles gambiae (African malaria mosquito).